A 486-amino-acid chain; its full sequence is MKGLLSLLLVGAANALAASYEPRSLTEDMLQGKEKEVWDAIKGEIPGAQLDDYFNPPTAHQREPDEKWDGKLEGKSVNTLWVEEGKDKPSGIEEYGMRFKTVDPSSLGVDNVTQYSGYLDNKKNGQHLFFWFFESRRDPQYDPVILWLNGGPGCSSMTSLFMELGPARVGQDLKLTRNPNSWNNRASIIFLDQPVNVGFSYGKSGAFNTPSASKDVFAFLTLFFKKFPQYALQDFHIAGESYAGHYIPFASYPPMACGKGGYSAVLDQPTCKAMEAAVPQCQKEIKRCYDKPTDVATCVKGAKFCKDALVRPYSRTGQSIYDIRGRCEDPKDLCYPILGWIAKYLNQRHVQKAIGAEVSHFKGCSNHISSQFFAHGDYNQPFHRKIPGILKDVNVLVYAGDADYICNWLGVKEWTEALQWPGRHIFRRKNLSVVYHSVNKWPLGRVKYHNGLAFLQVFKAGHRVPYDQPENALDFFNRWLAGEWTP.

The signal sequence occupies residues 1 to 17 (MKGLLSLLLVGAANALA). Asn-111 is a glycosylation site (N-linked (GlcNAc...) asparagine). The active site involves Ser-241. 3 disulfide bridges follow: Cys-281–Cys-305, Cys-288–Cys-298, and Cys-327–Cys-334. The active site involves Asp-403. Cys-406 lines the substrate pocket. A glycan (N-linked (GlcNAc...) asparagine) is linked at Asn-430. His-462 is a catalytic residue.

It belongs to the peptidase S10 family.

It is found in the secreted. The enzyme catalyses Release of a C-terminal amino acid with broad specificity.. Its function is as follows. Involved in degradation of small peptides. The sequence is that of Carboxypeptidase Y homolog ARB_07161 from Arthroderma benhamiae (strain ATCC MYA-4681 / CBS 112371) (Trichophyton mentagrophytes).